Reading from the N-terminus, the 68-residue chain is Large ribosomal subunit protein bL31 (68 aa).

Residues Cys16, Cys18, Cys36, and Cys39 each contribute to the Zn(2+) site.

The protein belongs to the bacterial ribosomal protein bL31 family. Type A subfamily. As to quaternary structure, part of the 50S ribosomal subunit. Zn(2+) serves as cofactor.

Its function is as follows. Binds the 23S rRNA. The sequence is that of Large ribosomal subunit protein bL31 from Dictyoglomus turgidum (strain DSM 6724 / Z-1310).